A 284-amino-acid chain; its full sequence is Probable endonuclease 4 (284 aa).

Zn(2+) is bound by residues His-69, His-113, Glu-148, Asp-182, His-185, His-217, Asp-230, His-232, and Glu-262.

It belongs to the AP endonuclease 2 family. Zn(2+) is required as a cofactor.

The catalysed reaction is Endonucleolytic cleavage to 5'-phosphooligonucleotide end-products.. Endonuclease IV plays a role in DNA repair. It cleaves phosphodiester bonds at apurinic or apyrimidinic (AP) sites, generating a 3'-hydroxyl group and a 5'-terminal sugar phosphate. This is Probable endonuclease 4 from Bifidobacterium longum subsp. infantis (strain ATCC 15697 / DSM 20088 / JCM 1222 / NCTC 11817 / S12).